A 314-amino-acid polypeptide reads, in one-letter code: Secreted frizzled-related protein 5 (314 aa).

An N-terminal signal peptide occupies residues 1–21; the sequence is MWVAWSARTAALALLLGALHG. An FZ domain is found at 45–162; the sequence is SKPPQCLDIP…PLDNDLCIAV (118 aa). Disulfide bonds link Cys50–Cys113, Cys60–Cys106, Cys97–Cys132, Cys121–Cys159, Cys125–Cys149, Cys178–Cys250, Cys181–Cys252, and Cys195–Cys300. Residues 178–300 form the NTR domain; it reads CAQCEMEHSA…AVKFMFSYPC (123 aa).

Belongs to the secreted frizzled-related protein (sFRP) family.

The protein localises to the secreted. Its function is as follows. Soluble frizzled-related proteins (sFRPS) function as modulators of Wnt signaling through direct interaction with Wnts. They have a role in regulating cell growth and differentiation in specific cell types. SFRP5 may be involved in determining the polarity of photoreceptor, and perhaps, other cells in the retina. This Mus musculus (Mouse) protein is Secreted frizzled-related protein 5 (Sfrp5).